The chain runs to 63 residues: Beta-defensin 38 (63 aa).

The first 21 residues, 1–21 (MKISCFLLLILSLYFFQINQA), serve as a signal peptide directing secretion. 3 disulfide bridges follow: Cys-29-Cys-58, Cys-36-Cys-51, and Cys-41-Cys-59.

Belongs to the beta-defensin family. In terms of tissue distribution, only expressed in epididymis (caput, corpus and cauda).

The protein localises to the secreted. Functionally, synthetic Defb38 kills both Gram-negative (E.coli and P.aeruginosa) and Gram-positive (E.faecium) bacteria. The chain is Beta-defensin 38 (Defb38) from Mus musculus (Mouse).